The chain runs to 523 residues: 2-oxopropyl-CoM reductase, carboxylating (523 aa).

Residue 53 to 54 participates in FAD binding; it reads AA. Arg56 serves as a coordination point for 2-oxopropyl-coenzyme M. FAD is bound at residue Ser81. 2-oxopropyl-coenzyme M is bound at residue Cys82. Cys82 and Cys87 are disulfide-bonded. Ala158 lines the FAD pocket. Residues 222–225 and 245–246 contribute to the NADP(+) site; these read GSKT and RT. Residue Asp353 participates in FAD binding. Glu360 contacts NADP(+). Position 361 (Met361) interacts with FAD. Residue Arg365 coordinates 2-oxopropyl-coenzyme M. Phe501 is an FAD binding site.

Belongs to the class-I pyridine nucleotide-disulfide oxidoreductase family. Homodimer. Component II of the aliphatic epoxide carboxylation complex together with components I, III and IV. FAD serves as cofactor.

It catalyses the reaction coenzyme M + acetoacetate + NADP(+) = 2-oxopropyl-coenzyme M + CO2 + NADPH. It participates in alkene metabolism; propylene degradation. With respect to regulation, inhibited (at 40%) by the coenzyme M analog 2-bromoethanesulfonate (BES). BES is a time-dependent inactivator of dithiothreitol-reduced 2-KPCC, where the redox active cysteines are in the free thiol forms. BES does not inactivate air-oxidized 2-KPCC, where the redox active cysteine pair is in the disulfide form. BES specifically alkylates the interchange thiol that facilitates thioether bond cleavage and enolacetone formation during catalysis. Its function is as follows. Involved in aliphatic epoxide carboxylation. Catalyzes the reductive cleavage of the thioether bond of 2-oxopropyl-coenzyme M (2-KPC), and the subsequent carboxylation of the ketopropyl cleavage product, yielding the products acetoacetate and free coenzyme M. In Xanthobacter autotrophicus (strain ATCC BAA-1158 / Py2), this protein is 2-oxopropyl-CoM reductase, carboxylating.